The chain runs to 220 residues: 7-cyano-7-deazaguanine synthase 1 (220 aa).

Residue 10–20 coordinates ATP; sequence FSGGIDSTVLL. Residues Cys-183, Cys-191, Cys-194, and Cys-197 each contribute to the Zn(2+) site.

Belongs to the QueC family. Homodimer. Zn(2+) serves as cofactor.

The catalysed reaction is 7-carboxy-7-deazaguanine + NH4(+) + ATP = 7-cyano-7-deazaguanine + ADP + phosphate + H2O + H(+). The protein operates within purine metabolism; 7-cyano-7-deazaguanine biosynthesis. Catalyzes the ATP-dependent conversion of 7-carboxy-7-deazaguanine (CDG) to 7-cyano-7-deazaguanine (preQ(0)). The polypeptide is 7-cyano-7-deazaguanine synthase 1 (Desulfitobacterium hafniense (strain Y51)).